Consider the following 78-residue polypeptide: Acyl carrier protein (78 aa).

The Carrier domain occupies Ser2 to Lys77. Ser37 is modified (O-(pantetheine 4'-phosphoryl)serine).

Belongs to the acyl carrier protein (ACP) family. Post-translationally, 4'-phosphopantetheine is transferred from CoA to a specific serine of apo-ACP by AcpS. This modification is essential for activity because fatty acids are bound in thioester linkage to the sulfhydryl of the prosthetic group.

It is found in the cytoplasm. It functions in the pathway lipid metabolism; fatty acid biosynthesis. Functionally, carrier of the growing fatty acid chain in fatty acid biosynthesis. The chain is Acyl carrier protein from Pseudomonas putida (strain GB-1).